Here is a 544-residue protein sequence, read N- to C-terminus: Probable protein kinase UbiB (544 aa).

A Protein kinase domain is found at 123-501 (DFDLVPLASA…KRQQATGKFL (379 aa)). ATP contacts are provided by residues 129–137 (LASASIAQV) and Lys152. Asp287 acts as the Proton acceptor in catalysis. 2 helical membrane-spanning segments follow: residues 496-516 (ATGKFLFGVGATLVVCSAILV) and 519-539 (TYEQLSLATAIAGVTFWLFSW).

It belongs to the ABC1 family. UbiB subfamily.

The protein resides in the cell inner membrane. The protein operates within cofactor biosynthesis; ubiquinone biosynthesis [regulation]. Functionally, is probably a protein kinase regulator of UbiI activity which is involved in aerobic coenzyme Q (ubiquinone) biosynthesis. This Vibrio vulnificus (strain CMCP6) protein is Probable protein kinase UbiB.